We begin with the raw amino-acid sequence, 155 residues long: uncharacterized protein (155 aa).

Positions 1–14 (MLTLSGWITTQVPP) are enriched in polar residues. The segment at 1–44 (MLTLSGWITTQVPPSSRAAADAKAARTGTAEQAEDPAAGTDAAD) is disordered. A compositionally biased stretch (low complexity) spans 17-30 (RAAADAKAARTGTA).

This is an uncharacterized protein from Pseudomonas aeruginosa (strain ATCC 15692 / DSM 22644 / CIP 104116 / JCM 14847 / LMG 12228 / 1C / PRS 101 / PAO1).